Reading from the N-terminus, the 785-residue chain is Copal-8-ol diphosphate hydratase TPSSA3, chloroplastic (785 aa).

Arg240 is a binding site for substrate. 2 residues coordinate Mg(2+): Asp372 and Asp374. The DXDD motif motif lies at 372–375 (DIDD). Arg459 is a substrate binding site.

Belongs to the terpene synthase family. It depends on Mg(2+) as a cofactor.

It localises to the plastid. It is found in the chloroplast. The enzyme catalyses (2E,6E,10E)-geranylgeranyl diphosphate + H2O = 8-hydroxycopalyl diphosphate. It participates in secondary metabolite biosynthesis; terpenoid biosynthesis. Functionally, involved in the biosynthesis of labdane-type diterpenoid including sclareol, a diterpene-diol that is used as fragrance and flavoring, and has anticancer effects (able to kill leukemic and colon cancer cells by apoptosis). Sclareol can also be used as synthesis precursor of ambergris substitution fragance products such as ambrox. Terpene synthase that produces 8-hydroxycopalyl diphosphate from geranylgeranyl diphosphate (GGPP). This is Copal-8-ol diphosphate hydratase TPSSA3, chloroplastic from Salvia sclarea (Clary sage).